The following is a 644-amino-acid chain: MNIFDHYRQRYEAAKDEEFTLQEFLTTCRQDRSAYANAAERLLMAIGEPVMVDTAQEPRLSRLFSNRVIARYPAFEEFYGMEDAIEQIVSYLKHAAQGLEEKKQILYLLGPVGGGKSSLAERLKSLMQLVPIYVLSANGERSPVNDHPFCLFNPQEDAQILEKEYGIPRRYLGTIMSPWAAKRLHEFGGDITKFRVVKVWPSILQQIAIAKTEPGDENNQDISALVGKVDIRKLEHYAQNDPDAYGYSGALCRANQGIMEFVEMFKAPIKVLHPLLTATQEGNYNGTEGISALPFNGIILAHSNESEWVTFRNNKNNEAFLDRVYIVKVPYCLRISEEIKIYEKLLNHSELTHAPCAPGTLETLSRFSILSRLKEPENSSIYSKMRVYDGESLKDTDPKAKSYQEYRDYAGVDEGMNGLSTRFAFKILSRVFNFDHVEVAANPVHLFYVLEQQIEREQFPQEQAERYLEFLKGYLIPKYAEFIGKEIQTAYLESYSEYGQNIFDRYVTYADFWIQDQEYRDPDTGQLFDRESLNAELEKIEKPAGISNPKDFRNEIVNFVLRARANNSGRNPNWTSYEKLRTVIEKKMFSNTEELLPVISFNAKTSTDEQKKHDDFVDRMMEKGYTRKQVRLLCEWYLRVRKSS.

This sequence belongs to the PrkA family. In terms of assembly, monomer.

The protein localises to the cytoplasm. The enzyme catalyses L-seryl-[protein] + ATP = O-phospho-L-seryl-[protein] + ADP + H(+). It catalyses the reaction L-threonyl-[protein] + ATP = O-phospho-L-threonyl-[protein] + ADP + H(+). Its function is as follows. Kinase that plays a role in the adaptation to sustained nitrogen starvation. The sequence is that of Serine/threonine kinase YeaG (yeaG) from Escherichia coli O157:H7.